Here is a 215-residue protein sequence, read N- to C-terminus: MATGDDIPTFKLVLVGDGGTGKTTFVKRHLTGEFEKKYVATLGVEVHPLIFHTNRGQIRFNVWDTAGQEKFGGLRDGYYIQGQCAIIMFDVTARVTYKNVPNWHRDLVRVCENIPIVLCGNKVDVKDRKVKAKTITFHRKKNLQYYDISAKSNYNFEKPFLWLARKLLGDPNLEFVAMPALAPPEVQMDPTMVAQYEQEIAAAANAELPDDDEDL.

The region spanning 6–170 (DIPTFKLVLV…LWLARKLLGD (165 aa)) is the Small GTPase Ran-type domain. GTP is bound by residues 17–24 (DGGTGKTT), 35–41 (EKKYVAT), Gly67, 121–124 (NKVD), and 149–151 (SAK). Residues 36–44 (KKYVATLGV) form a switch-I region. The segment at 67-83 (GQEKFGGLRDGYYIQGQ) is switch-II.

It belongs to the small GTPase superfamily. Ran family. In terms of assembly, found in a nuclear export complex with RanGTP, exportin and pre-miRNA.

It is found in the nucleus. In terms of biological role, GTP-binding protein involved in nucleocytoplasmic transport. Required for the import of protein into the nucleus and also for RNA export. Involved in chromatin condensation and control of cell cycle. This is GTP-binding nuclear protein Ran from Brugia malayi (Filarial nematode worm).